Consider the following 540-residue polypeptide: MAAGGSAPEPRVLVCLGALLAGWVAVGLEAVVIGEVHENVTLHCGNISGLRGQVTWYRNNSEPVFLLSSNSSLRPAEPRFSLVDATSLHIESLSLGDEGIYTCQEILNVTQWFQVWLQVASGPYQIEVHIVATGTLPNGTLYAARGSQVDFSCNSSSRPPPVVEWWFQALNSSSESFGHNLTVNFFSLLLISPNLQGNYTCLALNQLSKRHRKVTTELLVYYPPPSAPQCWAQMASGSFMLQLTCRWDGGYPDPDFLWIEEPGGVIVGKSKLGVEMLSESQLSDGKKFKCVTSHIVGPESGASCMVQIRGPSLLSEPMKTCFTGGNVTLTCQVSGAYPPAKILWLRNLTQPEVIIQPSSRHLITQDGQNSTLTIHNCSQDLDEGYYICRADSPVGVREMEIWLSVKEPLNIGGIVGTIVSLLLLGLAIISGLLLHYSPVFCWKVGNTSRGQNMDDVMVLVDSEEEEEEEEEEEEDAAVGEQEGAREREELPKEIPKQDHIHRVTALVNGNIEQMGNGFQDLQDDSSEEQSDIVQEEDRPV.

Residues 1 to 30 (MAAGGSAPEPRVLVCLGALLAGWVAVGLEA) form the signal peptide. 4 consecutive Ig-like C2-type domains span residues 31–119 (VVIG…WLQV), 123–215 (PYQI…RKVT), 223–309 (PPPS…VQIR), and 311–404 (PSLL…IWLS). The Extracellular segment spans residues 31-413 (VVIGEVHENV…SVKEPLNIGG (383 aa)). Residues N39, N46, N70, N108, N138, N171, N180, and N198 are each glycosylated (N-linked (GlcNAc...) asparagine). C44 and C103 are disulfide-bonded. Intrachain disulfides connect C153-C201 and C245-C290. A glycan (N-linked (GlcNAc...) asparagine) is linked at N326. C331 and C388 form a disulfide bridge. The chain crosses the membrane as a helical span at residues 414 to 434 (IVGTIVSLLLLGLAIISGLLL). The Cytoplasmic segment spans residues 435 to 540 (HYSPVFCWKV…DIVQEEDRPV (106 aa)). The segment covering 461–477 (DSEEEEEEEEEEEEDAA) has biased composition (acidic residues). 2 disordered regions span residues 461 to 500 (DSEEEEEEEEEEEEDAAVGEQEGAREREELPKEIPKQDHI) and 513 to 540 (QMGNGFQDLQDDSSEEQSDIVQEEDRPV). A compositionally biased stretch (basic and acidic residues) spans 482 to 500 (EGAREREELPKEIPKQDHI). Over residues 521–534 (LQDDSSEEQSDIVQ) the composition is skewed to acidic residues.

It is found in the membrane. The sequence is that of V-set and immunoglobulin domain-containing protein 10 (VSIG10) from Homo sapiens (Human).